Consider the following 89-residue polypeptide: Large ribosomal subunit protein bL28 (89 aa).

Belongs to the bacterial ribosomal protein bL28 family.

This is Large ribosomal subunit protein bL28 from Chlamydia abortus (strain DSM 27085 / S26/3) (Chlamydophila abortus).